The sequence spans 478 residues: Sedoheptulokinase (478 aa).

Belongs to the FGGY kinase family. As to expression, strongly expressed in liver, kidney and pancreas. Expressed at lower levels in placenta and heart. Very weakly expressed in lung and brain.

Its subcellular location is the cytoplasm. The enzyme catalyses sedoheptulose + ATP = D-sedoheptulose 7-phosphate + ADP + H(+). Acts as a modulator of macrophage activation through control of glucose metabolism. The polypeptide is Sedoheptulokinase (Homo sapiens (Human)).